The primary structure comprises 920 residues: Valine--tRNA ligase (920 aa).

The 'HIGH' region signature appears at 40–50 (PNVTGTLHMGH). The short motif at 522 to 526 (KMSKS) is the 'KMSKS' region element. K525 contributes to the ATP binding site. 2 coiled-coil regions span residues 642-668 (EWIR…DLLA) and 849-920 (AGVI…IESL).

It belongs to the class-I aminoacyl-tRNA synthetase family. ValS type 1 subfamily. In terms of assembly, monomer.

It localises to the cytoplasm. The enzyme catalyses tRNA(Val) + L-valine + ATP = L-valyl-tRNA(Val) + AMP + diphosphate. Its function is as follows. Catalyzes the attachment of valine to tRNA(Val). As ValRS can inadvertently accommodate and process structurally similar amino acids such as threonine, to avoid such errors, it has a 'posttransfer' editing activity that hydrolyzes mischarged Thr-tRNA(Val) in a tRNA-dependent manner. The protein is Valine--tRNA ligase of Coxiella burnetii (strain RSA 493 / Nine Mile phase I).